The chain runs to 530 residues: Arginine--tRNA ligase (530 aa).

The 'HIGH' region motif lies at 113-123; it reads ANPTGPLHIGH.

This sequence belongs to the class-I aminoacyl-tRNA synthetase family. As to quaternary structure, monomer.

The protein localises to the cytoplasm. It carries out the reaction tRNA(Arg) + L-arginine + ATP = L-arginyl-tRNA(Arg) + AMP + diphosphate. The polypeptide is Arginine--tRNA ligase (Campylobacter jejuni subsp. jejuni serotype O:6 (strain 81116 / NCTC 11828)).